The sequence spans 69 residues: Sec-independent protein translocase protein TatA (69 aa).

A helical transmembrane segment spans residues 1–21; that stretch reads MFPKLGMGELVVILLIVVILF. The segment at 43-69 is disordered; sequence SFSGEDEEKPSTPGATSSDEASKAKQA.

The protein belongs to the TatA/E family. As to quaternary structure, the Tat system comprises two distinct complexes: a TatABC complex, containing multiple copies of TatA, TatB and TatC subunits, and a separate TatA complex, containing only TatA subunits. Substrates initially bind to the TatABC complex, which probably triggers association of the separate TatA complex to form the active translocon.

It localises to the cell inner membrane. In terms of biological role, part of the twin-arginine translocation (Tat) system that transports large folded proteins containing a characteristic twin-arginine motif in their signal peptide across membranes. TatA could form the protein-conducting channel of the Tat system. The protein is Sec-independent protein translocase protein TatA of Anaeromyxobacter sp. (strain Fw109-5).